Reading from the N-terminus, the 335-residue chain is Urokinase plasminogen activator surface receptor (335 aa).

The signal sequence occupies residues 1 to 22 (MGHPLLLPLLLLLHTCVPASWG). 3 UPAR/Ly6 domains span residues 23–114 (LRCM…RSRY), 115–213 (LECI…PQNG), and 214–305 (HQCY…YRKG). Cystine bridges form between C25/C46, C28/C34, and C39/C67. N-linked (GlcNAc...) asparagine glycosylation is present at N74. Cystine bridges form between C93–C98, C117–C144, C120–C127, C137–C169, C175–C192, C193–C198, C216–C244, C219–C227, C237–C263, C269–C287, and C288–C293. N-linked (GlcNAc...) asparagine glycans are attached at residues N184, N194, N222, and N255. Residue G305 is the site of GPI-anchor amidated glycine attachment. A propeptide spans 306 to 335 (AAPQPGPAHLSLTITLLMTARLWGGTLLWT) (removed in mature form).

Monomer. Interacts (via the UPAR/Ly6 domains) with SRPX2. Interacts with MRC2. Interacts with FAP (seprase); the interaction occurs at the cell surface of invadopodia membrane. Interacts with SORL1 (via N-terminal ectodomain); this interaction decreases PLAUR internalization. The ternary complex composed of PLAUR-PLAU-SERPINE1 also interacts with SORL1.

The protein resides in the cell membrane. Its subcellular location is the cell projection. The protein localises to the invadopodium membrane. Functionally, acts as a receptor for urokinase plasminogen activator. Plays a role in localizing and promoting plasmin formation. Mediates the proteolysis-independent signal transduction activation effects of U-PA. It is subject to negative-feedback regulation by U-PA which cleaves it into an inactive form. This chain is Urokinase plasminogen activator surface receptor (PLAUR), found in Chlorocebus aethiops (Green monkey).